A 1693-amino-acid chain; its full sequence is uncharacterized protein (1693 aa).

16 WD repeats span residues 1008-1042, 1053-1083, 1094-1124, 1135-1165, 1176-1206, 1217-1247, 1258-1288, 1299-1329, 1340-1370, 1381-1411, 1422-1452, 1463-1493, 1504-1534, 1545-1575, 1586-1616, and 1627-1657; these read HHEG…YLWS, GHQE…KLWQ, GHED…RIWN, GHAD…RLWD, GHTS…RLWD, GHQN…RVWS, GHDH…RLWT, GHQK…RQWD, GHSH…RLWT, DHQG…QLWN, GHQD…RVWN, HYEK…GIWE, GHEG…RIWD, GHQS…RLWD, GHQG…RLWD, and GHGN…KLWP.

This is an uncharacterized protein from Synechocystis sp. (strain ATCC 27184 / PCC 6803 / Kazusa).